Consider the following 296-residue polypeptide: Biliverdin reductase A (296 aa).

Positions 1-2 are excised as a propeptide; sequence MN. NADP(+)-binding positions include 16–19, 44–46, 77–80, and tyrosine 98; these read VGRA, SRR, and SSSH. Threonine 174 bears the Phosphothreonine mark. A phosphoserine mark is found at serine 178 and serine 230. Lysine 248 and lysine 253 each carry N6-acetyllysine. Zn(2+) is bound by residues histidine 280, cysteine 281, cysteine 292, and cysteine 293.

It belongs to the Gfo/Idh/MocA family. Biliverdin reductase subfamily. Monomer. Requires Zn(2+) as cofactor. Liver.

It localises to the cytoplasm. The protein resides in the cytosol. The enzyme catalyses (4Z,15Z)-bilirubin IXalpha + NAD(+) = biliverdin IXalpha + NADH + H(+). The catalysed reaction is (4Z,15Z)-bilirubin IXalpha + NADP(+) = biliverdin IXalpha + NADPH + H(+). The protein operates within porphyrin-containing compound metabolism; protoheme degradation. Functionally, reduces the gamma-methene bridge of the open tetrapyrrole, biliverdin IXalpha, to bilirubin with the concomitant oxidation of a NADH or NADPH cofactor. Does not reduce bilirubin IXbeta. Uses the reactants NADH or NADPH depending on the pH; NADH is used at the acidic pH range (6-6.9) and NADPH at the alkaline range (8.5-8.7). NADPH, however, is the probable reactant in biological systems. This Homo sapiens (Human) protein is Biliverdin reductase A.